Here is a 252-residue protein sequence, read N- to C-terminus: Trans-aconitate 2-methyltransferase (252 aa).

It belongs to the methyltransferase superfamily. Tam family.

It is found in the cytoplasm. It catalyses the reaction trans-aconitate + S-adenosyl-L-methionine = (E)-3-(methoxycarbonyl)pent-2-enedioate + S-adenosyl-L-homocysteine. Functionally, catalyzes the S-adenosylmethionine monomethyl esterification of trans-aconitate. The chain is Trans-aconitate 2-methyltransferase from Shigella dysenteriae serotype 1 (strain Sd197).